The primary structure comprises 427 residues: Tryptophan synthase beta chain (427 aa).

Lys-100 carries the post-translational modification N6-(pyridoxal phosphate)lysine.

Belongs to the TrpB family. As to quaternary structure, tetramer of two alpha and two beta chains. Requires pyridoxal 5'-phosphate as cofactor.

The enzyme catalyses (1S,2R)-1-C-(indol-3-yl)glycerol 3-phosphate + L-serine = D-glyceraldehyde 3-phosphate + L-tryptophan + H2O. The protein operates within amino-acid biosynthesis; L-tryptophan biosynthesis; L-tryptophan from chorismate: step 5/5. Functionally, the beta subunit is responsible for the synthesis of L-tryptophan from indole and L-serine. In Streptomyces coelicolor (strain ATCC BAA-471 / A3(2) / M145), this protein is Tryptophan synthase beta chain (trpB).